The chain runs to 256 residues: Omega-amidase YafV (256 aa).

One can recognise a CN hydrolase domain in the interval 4-234; the sequence is LKITLLQQPL…ATRIDAELSM (231 aa). Catalysis depends on Glu42, which acts as the Proton acceptor. The active site involves Lys107. The active-site Nucleophile is Cys141.

It belongs to the carbon-nitrogen hydrolase superfamily. NIT1/NIT2 family.

The catalysed reaction is a monoamide of a dicarboxylate + H2O = a dicarboxylate + NH4(+). In terms of biological role, hydrolyzes alpha-ketoglutaramate (a-KGM) to alpha-ketoglutarate (alpha-KG) and ammonia (specific activity 6.65 umol/min/mg), has weak activity on L-glutamine, almost no activity on deaminated glutathione (dGSH) and none on glutathione. May function as a metabolite repair enzyme. In Escherichia coli (strain B / BL21-DE3), this protein is Omega-amidase YafV (yafV).